Consider the following 284-residue polypeptide: MCNTPTYCDLGKAAKDVFNKGYGFGMVKIDLKTKSCSGVMEFSTSGHAYTDTGKASGNLETKYKVRNYGLTFTQKWNTDNTLGTEISWENKLAEGLKLTLDTIFVPNTGKKSGKLKASYKRDCFSVGSNVDIDFSGPTIYGWAVLAFEGWLAGYQMSFDTAKSKLSQNNFALGYKAADFQLHTHVNDGTEFGGSIYQKVNEKIETSINLAWTAGSNNTRFGIAAKYMLDCRTSLSAKVNNASLIGLGYTQTLRPGVKLTLSALIDGKNFSAGGHKVGLGFELEA.

Cys-2 bears the N-acetylcysteine mark. Position 4 is a phosphothreonine (Thr-4). 3 positions are modified to N6-acetyllysine: Lys-12, Lys-15, and Lys-20. Transmembrane regions (beta stranded) follow at residues 26–35 (MVKIDLKTKS) and 39–48 (VMEFSTSGHA). Residue Lys-54 forms a Glycyl lysine isopeptide (Lys-Gly) (interchain with G-Cter in ubiquitin) linkage. Transmembrane regions (beta stranded) follow at residues 55 to 65 (ASGNLETKYKV), 70 to 77 (LTFTQKWN), and 81 to 90 (TLGTEISWEN). Lys-91 is modified (N6-acetyllysine). The chain crosses the membrane as a beta stranded span at residues 96 to 105 (LKLTLDTIFV). Glycyl lysine isopeptide (Lys-Gly) (interchain with G-Cter in ubiquitin) cross-links involve residues Lys-110 and Lys-111. 10 consecutive transmembrane segments (beta stranded) span residues 112–121 (SGKLKASYKR), 124–131 (FSVGSNVD), 138–146 (TIYGWAVLA), 151–159 (LAGYQMSFD), 164–176 (KLSQ…GYKA), 179–186 (FQLHTHVN), 190–199 (EFGGSIYQKV), 203–212 (IETSINLAWT), 219–228 (RFGIAAKYML), and 232–239 (TSLSAKVN). The residue at position 242 (Ser-242) is a Phosphoserine. Residues 243-245 (LIG) and 261-265 (SALID) each bind NAD(+). 2 beta stranded membrane-spanning segments follow: residues 243–252 (LIGLGYTQTL) and 255–264 (GVKLTLSALI). Lys-267 carries the N6-acetyllysine; alternate modification. Lys-267 participates in a covalent cross-link: Glycyl lysine isopeptide (Lys-Gly) (interchain with G-Cter in ubiquitin); alternate. Residues 274-283 (HKVGLGFELE) form a beta stranded membrane-spanning segment.

The protein belongs to the eukaryotic mitochondrial porin family. In terms of assembly, interacts with ARMC12 in a TBC1D21-dependent manner. Interacts with MISFA. Ubiquitinated by PRKN during mitophagy, leading to its degradation and enhancement of mitophagy. Deubiquitinated by USP30.

The protein localises to the mitochondrion outer membrane. The protein resides in the membrane. It catalyses the reaction chloride(in) = chloride(out). The catalysed reaction is K(+)(in) = K(+)(out). In terms of biological role, non-selective voltage-gated ion channel that mediates the transport of anions and cations through the mitochondrion outer membrane and plasma membrane. Forms a high-conducting channel with a stable open state and a voltage-induced closure with a mild preference for anions over cations. Involved in male fertility and sperm mitochondrial sheath formation. The sequence is that of Non-selective voltage-gated ion channel VDAC3 from Pongo abelii (Sumatran orangutan).